The chain runs to 351 residues: Protein-glutamate methylesterase/protein-glutamine glutaminase (351 aa).

The Response regulatory domain maps to 8–125; sequence TVVVVDDSLT…GEDPFAGLGD (118 aa). At aspartate 59 the chain carries 4-aspartylphosphate. Residues 151–345 form the CheB-type methylesterase domain; the sequence is PKIGTVVGIG…PAILNLCERR (195 aa). Residues serine 162, histidine 188, and aspartate 287 contribute to the active site.

It belongs to the CheB family. In terms of processing, phosphorylated by CheA. Phosphorylation of the N-terminal regulatory domain activates the methylesterase activity.

It is found in the cytoplasm. The catalysed reaction is [protein]-L-glutamate 5-O-methyl ester + H2O = L-glutamyl-[protein] + methanol + H(+). It catalyses the reaction L-glutaminyl-[protein] + H2O = L-glutamyl-[protein] + NH4(+). In terms of biological role, involved in chemotaxis. Part of a chemotaxis signal transduction system that modulates chemotaxis in response to various stimuli. Catalyzes the demethylation of specific methylglutamate residues introduced into the chemoreceptors (methyl-accepting chemotaxis proteins or MCP) by CheR. Also mediates the irreversible deamidation of specific glutamine residues to glutamic acid. This chain is Protein-glutamate methylesterase/protein-glutamine glutaminase, found in Gluconobacter oxydans (strain 621H) (Gluconobacter suboxydans).